The sequence spans 329 residues: Transaldolase (329 aa).

K136 acts as the Schiff-base intermediate with substrate in catalysis.

The protein belongs to the transaldolase family. Type 1 subfamily. As to quaternary structure, homodimer.

It localises to the cytoplasm. The catalysed reaction is D-sedoheptulose 7-phosphate + D-glyceraldehyde 3-phosphate = D-erythrose 4-phosphate + beta-D-fructose 6-phosphate. The protein operates within carbohydrate degradation; pentose phosphate pathway; D-glyceraldehyde 3-phosphate and beta-D-fructose 6-phosphate from D-ribose 5-phosphate and D-xylulose 5-phosphate (non-oxidative stage): step 2/3. Its function is as follows. Transaldolase is important for the balance of metabolites in the pentose-phosphate pathway. The protein is Transaldolase of Methylococcus capsulatus (strain ATCC 33009 / NCIMB 11132 / Bath).